The primary structure comprises 137 residues: DNA-directed RNA polymerase subunit omega (137 aa).

The tract at residues 78–137 is disordered; that stretch reads DEPEPEAVPLLSSSPAAAAVAPQAASGDDNDIQFDRMSEEDLLRGLENLAPPTETEDEGD. A compositionally biased stretch (low complexity) spans 84–103; it reads AVPLLSSSPAAAAVAPQAAS. Residues 110 to 121 are compositionally biased toward basic and acidic residues; that stretch reads QFDRMSEEDLLR.

The protein belongs to the RNA polymerase subunit omega family. In terms of assembly, the RNAP catalytic core consists of 2 alpha, 1 beta, 1 beta' and 1 omega subunit. When a sigma factor is associated with the core the holoenzyme is formed, which can initiate transcription.

The enzyme catalyses RNA(n) + a ribonucleoside 5'-triphosphate = RNA(n+1) + diphosphate. Promotes RNA polymerase assembly. Latches the N- and C-terminal regions of the beta' subunit thereby facilitating its interaction with the beta and alpha subunits. The chain is DNA-directed RNA polymerase subunit omega from Methylobacterium sp. (strain 4-46).